We begin with the raw amino-acid sequence, 270 residues long: Splicing factor YJU2 (270 aa).

Residues 1 to 32 (MSERKVLNKYIPPDYDPSIRPPKKKKKFQGPN) form a disordered region. Residues C48, C51, C84, and C87 each coordinate Zn(2+). The tract at residues 251-270 (PNFQPPKYAKRKMEKKKVLV) is disordered. Positions 258–270 (YAKRKMEKKKVLV) are enriched in basic residues.

Belongs to the CWC16 family. YJU2 subfamily. As to quaternary structure, component of the spliceosome. Present in the activated B complex, the catalytically activated B* complex which catalyzes the branching, the catalytic step 1 C complex catalyzing the exon ligation, and the postcatalytic P complex containing the ligated exons (mRNA) and the excised lariat intron. Belongs to the 40S cdc5-associated complex (or cwf complex), a spliceosome sub-complex reminiscent of a late-stage spliceosome composed of the U2, U5 and U6 snRNAs and at least brr2, cdc5, cwf2/prp3, cwf3/syf1, cwf4/syf3, cwf5/ecm2, spp42/cwf6, cwf7/spf27, cwf8, cwf9, cwf10, cwf11, cwf12, prp45/cwf13, cwf14, cwf15, cwf16, cwf17, cwf18, cwf19, cwf20, cwf21, cwf22, cwf23, cwf24, cwf25, cwf26, cyp7/cwf27, cwf28, cwf29/ist3, lea1, msl1, prp5/cwf1, prp10, prp12/sap130, prp17, prp22, sap61, sap62, sap114, sap145, slu7, smb1, smd1, smd3, smf1, smg1 and syf2.

It is found in the nucleus. In terms of biological role, part of the spliceosome which catalyzes two sequential transesterification reactions, first the excision of the non-coding intron from pre-mRNA and then the ligation of the coding exons to form the mature mRNA. Plays a role in stabilizing the structure of the spliceosome catalytic core and docking of the branch helix into the active site, producing 5'-exon and lariat intron-3'-intermediates. In Schizosaccharomyces pombe (strain 972 / ATCC 24843) (Fission yeast), this protein is Splicing factor YJU2 (cwf16).